The sequence spans 616 residues: Dihydroxy-acid dehydratase (616 aa).

Residue Asp-81 coordinates Mg(2+). Cys-122 is a binding site for [2Fe-2S] cluster. Mg(2+) is bound by residues Asp-123 and Lys-124. Lys-124 carries the post-translational modification N6-carboxylysine. Cys-195 provides a ligand contact to [2Fe-2S] cluster. Residue Glu-491 participates in Mg(2+) binding. Ser-517 acts as the Proton acceptor in catalysis.

It belongs to the IlvD/Edd family. Homodimer. [2Fe-2S] cluster is required as a cofactor. The cofactor is Mg(2+).

It carries out the reaction (2R)-2,3-dihydroxy-3-methylbutanoate = 3-methyl-2-oxobutanoate + H2O. The catalysed reaction is (2R,3R)-2,3-dihydroxy-3-methylpentanoate = (S)-3-methyl-2-oxopentanoate + H2O. It functions in the pathway amino-acid biosynthesis; L-isoleucine biosynthesis; L-isoleucine from 2-oxobutanoate: step 3/4. It participates in amino-acid biosynthesis; L-valine biosynthesis; L-valine from pyruvate: step 3/4. Functionally, functions in the biosynthesis of branched-chain amino acids. Catalyzes the dehydration of (2R,3R)-2,3-dihydroxy-3-methylpentanoate (2,3-dihydroxy-3-methylvalerate) into 2-oxo-3-methylpentanoate (2-oxo-3-methylvalerate) and of (2R)-2,3-dihydroxy-3-methylbutanoate (2,3-dihydroxyisovalerate) into 2-oxo-3-methylbutanoate (2-oxoisovalerate), the penultimate precursor to L-isoleucine and L-valine, respectively. The sequence is that of Dihydroxy-acid dehydratase from Klebsiella pneumoniae (strain 342).